Reading from the N-terminus, the 902-residue chain is Cytosolic 10-formyltetrahydrofolate dehydrogenase (902 aa).

Residues 1–310 form a hydrolase domain region; sequence MKIAVIGQSL…PASQYFKTAD (310 aa). 88–90 contacts (6R)-10-formyltetrahydrofolate; it reads QFI. His-106 serves as the catalytic Proton donor. Residue Asp-142 participates in (6R)-10-formyltetrahydrofolate binding. Positions 318 to 395 constitute a Carrier domain; the sequence is EEEQKVSEEI…EFIQMVVRRM (78 aa). The residue at position 354 (Ser-354) is an O-(pantetheine 4'-phosphoryl)serine. The interval 417-902 is aldehyde dehydrogenase domain; sequence TVKIPHQLFI…LKTKAVTIEY (486 aa). NADP(+) contacts are provided by residues 571–573, 597–600, 630–635, 650–651, and 673–674; these read IPW, KPAQ, GSLIGQ, GS, and EL. Glu-673 functions as the Proton acceptor in the catalytic mechanism. Residue Cys-707 is the Proton donor of the active site. Residues Lys-757 and 804–806 each bind NADP(+); that span reads ESF.

This sequence in the N-terminal section; belongs to the GART family. It in the C-terminal section; belongs to the aldehyde dehydrogenase family. ALDH1L subfamily. Homotetramer. In terms of processing, phosphopantetheinylation at Ser-354 by AASDHPPT is required for the formyltetrahydrofolate dehydrogenase activity.

It is found in the cytoplasm. Its subcellular location is the cytosol. The catalysed reaction is (6R)-10-formyltetrahydrofolate + NADP(+) + H2O = (6S)-5,6,7,8-tetrahydrofolate + CO2 + NADPH + H(+). Functionally, cytosolic 10-formyltetrahydrofolate dehydrogenase that catalyzes the NADP(+)-dependent conversion of 10-formyltetrahydrofolate to tetrahydrofolate and carbon dioxide. May also have an NADP(+)-dependent aldehyde dehydrogenase activity towards formaldehyde, acetaldehyde, propionaldehyde, and benzaldehyde. This is Cytosolic 10-formyltetrahydrofolate dehydrogenase (aldh1l1) from Xenopus laevis (African clawed frog).